We begin with the raw amino-acid sequence, 199 residues long: MTVPLILASGSAIRAQLLENAAVPFTKDVPRVDEESVKAALLAESAPPRDIADALAEMKARKISDKHPGAMVLGCDQVLDFQGRLLSKPDSPETALAELKQMSGQRHMLLSAAVIYENGQPVWRHVGQVRLRMRALSDSYLSGYVARNWDSIRHAVGGYKLEEEGVRLFSTIDGDHFNVLGMPLLELLNFLALRGVIDT.

Asp-76 functions as the Proton acceptor in the catalytic mechanism.

The protein belongs to the Maf family. The cofactor is a divalent metal cation.

It is found in the cytoplasm. The catalysed reaction is a ribonucleoside 5'-triphosphate + H2O = a ribonucleoside 5'-phosphate + diphosphate + H(+). The enzyme catalyses a 2'-deoxyribonucleoside 5'-triphosphate + H2O = a 2'-deoxyribonucleoside 5'-phosphate + diphosphate + H(+). Functionally, nucleoside triphosphate pyrophosphatase. May have a dual role in cell division arrest and in preventing the incorporation of modified nucleotides into cellular nucleic acids. The polypeptide is Nucleoside triphosphate pyrophosphatase (Ruegeria pomeroyi (strain ATCC 700808 / DSM 15171 / DSS-3) (Silicibacter pomeroyi)).